Reading from the N-terminus, the 227-residue chain is Ferritin light chain (227 aa).

The first 19 residues, 1-19, serve as a signal peptide directing secretion; that stretch reads MKFFVALALFACLGSLALA. Cysteines 25 and 44 form a disulfide. The 161-residue stretch at 48-208 folds into the Ferritin-like diiron domain; it reads FAGIDHIEPE…GYANDLAKLM (161 aa).

Belongs to the ferritin family. In terms of assembly, oligomer of 12 light (L) chains and 12 heavy (H) chains; L and H chains are disulfide-linked. The functional molecule forms a roughly spherical shell with a diameter of 12 nm and contains a central cavity into which the insoluble ferric iron core is deposited. In terms of tissue distribution, expressed in hemolymph, gut, ovaries and to a lesser extent in testes (at protein level). Expressed in the head (at protein level).

Its subcellular location is the golgi apparatus. The protein localises to the secreted. In terms of biological role, stores iron in a soluble, non-toxic, readily available form. Important for iron homeostasis. Iron is taken up in the ferrous form and deposited as ferric hydroxides after oxidation. Ferritin is composed of a heavy (H) chain which is responsible for the oxidation and uptake of ferrous iron, and a light (L) chain which facilitates the nucleation of the ferrihydrite iron core. Required for dietary iron absorption in the midgut. Involved in tissue iron detoxification by exporting excess iron. Plays a role in the maintenance of circadian rhythms. Required for embryo and larval development. This Drosophila melanogaster (Fruit fly) protein is Ferritin light chain.